A 478-amino-acid chain; its full sequence is GDP-fucose protein O-fucosyltransferase 3 (478 aa).

Residues 1–8 (MVWIQRRR) are Cytoplasmic-facing. A helical; Signal-anchor for type II membrane protein transmembrane segment spans residues 9 to 31 (LLASCLCITATVFLLVTLQVVVE). Topologically, residues 32 to 478 (LGKFERKKFK…QEFWALVFKD (447 aa)) are lumenal. 2 N-linked (GlcNAc...) asparagine glycosylation sites follow: N110 and N168. A disulfide bridge connects residues C389 and C392.

Belongs to the glycosyltransferase 10 family.

It localises to the endoplasmic reticulum membrane. The enzyme catalyses L-threonyl-[protein] + GDP-beta-L-fucose = 3-O-(alpha-L-fucosyl)-L-threonyl-[protein] + GDP + H(+). It catalyses the reaction L-seryl-[protein] + GDP-beta-L-fucose = 3-O-(alpha-L-fucosyl)-L-seryl-[protein] + GDP + H(+). It functions in the pathway protein modification; protein glycosylation. Functionally, protein O-fucosyltransferase that specifically catalyzes O-fucosylation of serine or threonine residues in EMI domains of target proteins, such as MMRN1, MMRN2 and EMID1. Attaches fucose through an O-glycosidic linkage. O-fucosylation of EMI domain-containing proteins may be required for facilitating protein folding and secretion. May also show alpha-(1,3)-fucosyltransferase activity toward the innermost N-acetyl glucosamine (GlcNAc) residue in biantennary N-glycan acceptors. However, this was tested with a library of synthetic substrates and this activity is unsure in vivo. May be involved in biosynthesis of Lewis X-carrying biantennary N-glycans that regulate neuron stem cell self-renewal during brain development. The chain is GDP-fucose protein O-fucosyltransferase 3 (FUT10) from Canis lupus familiaris (Dog).